The sequence spans 130 residues: Capsid protein (130 aa).

The interval 31–104 (EWLSNNSRSQ…FAATDDVTVI (74 aa)) is viral RNA-binding.

The protein belongs to the Leviviricetes capsid protein family. In terms of assembly, homodimer. The capsid proteins form dimers that assemble by group of 5. Twelve such pentamers are linked together with free dimers. The homodimers binds to the viral RNA via an operator hairpin, but also to many other RNA sequences in the viral genome; this interaction probably shifts the virus from the replicative to the assembly phase and ensures specific encapsidation of the viral genome.

It is found in the virion. In terms of biological role, capsid protein self-assembles to form an icosahedral capsid with a T=3 symmetry, about 26 nm in diameter, and consisting of 89 capsid proteins dimers (178 capsid proteins). Involved in viral genome encapsidation through the interaction between a capsid protein dimer and the multiple packaging signals present in the RNA genome. The capsid also contains 1 copy of the A2 maturation protein. Functionally, acts as a translational repressor of viral replicase synthesis late in infection. This latter function is the result of capsid protein interaction with an RNA hairpin which contains the replicase ribosome-binding site. This chain is Capsid protein, found in Escherichia coli (Bacteriophage JP34).